The following is an 859-amino-acid chain: Bifunctional uridylyltransferase/uridylyl-removing enzyme (859 aa).

The interval 1-325 (MSAHAAPSPE…PATSGITRVL (325 aa)) is uridylyltransferase. The tract at residues 326-682 (SHDRFVEKQG…ARPSPIGDAL (357 aa)) is uridylyl-removing. Residues 444 to 566 (VDQHILMVLR…VGNERYLTAL (123 aa)) enclose the HD domain. ACT domains follow at residues 683-762 (QVLV…PEPS) and 791-859 (ILSV…AIAV).

This sequence belongs to the GlnD family. Requires Mg(2+) as cofactor.

It carries out the reaction [protein-PII]-L-tyrosine + UTP = [protein-PII]-uridylyl-L-tyrosine + diphosphate. The enzyme catalyses [protein-PII]-uridylyl-L-tyrosine + H2O = [protein-PII]-L-tyrosine + UMP + H(+). Uridylyltransferase (UTase) activity is inhibited by glutamine, while glutamine activates uridylyl-removing (UR) activity. In terms of biological role, modifies, by uridylylation and deuridylylation, the PII regulatory proteins (GlnB and homologs), in response to the nitrogen status of the cell that GlnD senses through the glutamine level. Under low glutamine levels, catalyzes the conversion of the PII proteins and UTP to PII-UMP and PPi, while under higher glutamine levels, GlnD hydrolyzes PII-UMP to PII and UMP (deuridylylation). Thus, controls uridylylation state and activity of the PII proteins, and plays an important role in the regulation of nitrogen fixation and metabolism. The chain is Bifunctional uridylyltransferase/uridylyl-removing enzyme from Burkholderia vietnamiensis (strain G4 / LMG 22486) (Burkholderia cepacia (strain R1808)).